The following is a 130-amino-acid chain: Protein ApaG (130 aa).

The ApaG domain occupies 3–127; the sequence is RAITRNIQVT…FSLDVPDVRR (125 aa).

The chain is Protein ApaG from Xanthobacter autotrophicus (strain ATCC BAA-1158 / Py2).